The following is a 539-amino-acid chain: Carotene epsilon-monooxygenase, chloroplastic (539 aa).

The N-terminal 36 residues, 1–36 (MESSLFSPSSSSYSSLFTAKPTRLLSPKPKFTFSIR), are a transit peptide targeting the chloroplast. A heme-binding site is contributed by Cys487.

This sequence belongs to the cytochrome P450 family. Requires heme as cofactor.

The protein resides in the plastid. The protein localises to the chloroplast. The catalysed reaction is alpha-carotene + reduced [NADPH--hemoprotein reductase] + O2 = alpha-cryptoxanthin + oxidized [NADPH--hemoprotein reductase] + H2O + H(+). It carries out the reaction zeinoxanthin + reduced [NADPH--hemoprotein reductase] + O2 = lutein + oxidized [NADPH--hemoprotein reductase] + H2O + H(+). Its function is as follows. Heme-containing cytochrome P450 involved in the biosynthesis of xanthophylls. Specific for epsilon- and beta-ring hydroxylation of alpha-carotene. Has only a low activity toward the beta-rings of beta-carotene. The preferred substrate in planta is not alpha-carotene but the epsilon-ring of zeinoxanthin. Possesses a major beta-carotene hydroxylase activity in planta when depleted in its preferred substrate alpha-carotene. This is Carotene epsilon-monooxygenase, chloroplastic (CYP97C1) from Arabidopsis thaliana (Mouse-ear cress).